The following is a 234-amino-acid chain: NAD-dependent protein deacylase (234 aa).

The 234-residue stretch at 1–234 (MTKQVRIVVL…LVPHYLAQFL (234 aa)) folds into the Deacetylase sirtuin-type domain. Residue 12–31 (GAGISAESGIRTFRATDGLW) participates in NAD(+) binding. Substrate-binding residues include Y56 and R59. 93-96 (QNVD) provides a ligand contact to NAD(+). Residue H111 is the Proton acceptor of the active site. Zn(2+) is bound by residues C119 and C138. Residues 178 to 180 (GTS), 204 to 206 (NLE), and A222 contribute to the NAD(+) site.

The protein belongs to the sirtuin family. Class III subfamily. The cofactor is Zn(2+).

The protein localises to the cytoplasm. The enzyme catalyses N(6)-acetyl-L-lysyl-[protein] + NAD(+) + H2O = 2''-O-acetyl-ADP-D-ribose + nicotinamide + L-lysyl-[protein]. The catalysed reaction is N(6)-succinyl-L-lysyl-[protein] + NAD(+) + H2O = 2''-O-succinyl-ADP-D-ribose + nicotinamide + L-lysyl-[protein]. In terms of biological role, NAD-dependent lysine deacetylase and desuccinylase that specifically removes acetyl and succinyl groups on target proteins. Modulates the activities of several proteins which are inactive in their acylated form. The chain is NAD-dependent protein deacylase from Pasteurella multocida (strain Pm70).